Reading from the N-terminus, the 152-residue chain is Small ribosomal subunit protein uS9 (152 aa).

It belongs to the universal ribosomal protein uS9 family.

The polypeptide is Small ribosomal subunit protein uS9 (Mycobacterium ulcerans (strain Agy99)).